Reading from the N-terminus, the 926-residue chain is Protein Niban 1 (926 aa).

G2 carries N-myristoyl glycine lipidation. 5 positions are modified to phosphoserine: S578, S581, S595, S601, and S640. 2 disordered regions span residues 604–699 and 719–889; these read LPGA…VPGS and VEND…EQVN. A compositionally biased stretch (polar residues) spans 661–672; that stretch reads VENTAGPLSSHL. S699 bears the Phosphoserine mark. Basic and acidic residues predominate over residues 733-745; it reads NIKEEESKIHPEA. S755 is subject to Phosphoserine. Basic and acidic residues predominate over residues 756-767; it reads CEEREVREKEAQ. The segment covering 784–797 has biased composition (low complexity); that stretch reads GRGSTSQSTSGGLT. The segment covering 840-854 has biased composition (polar residues); it reads VTVTPQEDATLSSNP. At S923 the chain carries Phosphoserine.

It belongs to the Niban family.

The protein localises to the cytoplasm. Its subcellular location is the membrane. Its function is as follows. Regulates phosphorylation of a number of proteins involved in translation regulation including EIF2A, EIF4EBP1 and RPS6KB1. May be involved in the endoplasmic reticulum stress response. In Mus musculus (Mouse), this protein is Protein Niban 1.